The primary structure comprises 444 residues: GVGFKAGVKDYRLTHYTPDYETKDTDILAAFRMTPQPGVPAAEAGAAVAAESSTGTWTTVWTDGLTSLDRYKGRCYEIEPVPGEENQFIAYVAYPPDLSEEGSVTNMFTSIVGNVFGFKALRALRLEDSRIPPAYSKTFMGPPHGIQVERDKLNKYGRPLLGCTIKPKLGLSAKNYGRAVYECLRGGLDFTKDDENVNSQPFMRWRDRFLFVAEALFKSQAETGEIKGHYSNATAGTCEEMLKRAVFARELGVPIVMHDYLTGGFTANTSLAFYCWDNGLLLHIHRAMHAVIDRQKNHGIHFRVLAKALRMSSGDHIHSGTVVGKLEGERDITLGFVDLLRDDYIEKDRSRGIYFTQDWVSMPGVLPVASGGIHVWHMPALTEIFGDDSVLQFGGGTLGHPWGNAPGAVANRVAPEACVQARNEGRDLAREGNETIREAAKWSP.

Position 5 is an N6,N6,N6-trimethyllysine (Lys5). Substrate contacts are provided by Asn114 and Thr164. Lys166 (proton acceptor) is an active-site residue. Lys168 serves as a coordination point for substrate. Residues Lys192, Asp194, and Glu195 each contribute to the Mg(2+) site. Lys192 is modified (N6-carboxylysine). His285 acts as the Proton acceptor in catalysis. Substrate is bound by residues Arg286, His318, and Ser370.

This sequence belongs to the RuBisCO large chain family. Type I subfamily. As to quaternary structure, heterohexadecamer of 8 large chains and 8 small chains; disulfide-linked. The disulfide link is formed within the large subunit homodimers. Mg(2+) is required as a cofactor. The disulfide bond which can form in the large chain dimeric partners within the hexadecamer appears to be associated with oxidative stress and protein turnover.

The protein localises to the plastid. The protein resides in the chloroplast. The catalysed reaction is 2 (2R)-3-phosphoglycerate + 2 H(+) = D-ribulose 1,5-bisphosphate + CO2 + H2O. It catalyses the reaction D-ribulose 1,5-bisphosphate + O2 = 2-phosphoglycolate + (2R)-3-phosphoglycerate + 2 H(+). RuBisCO catalyzes two reactions: the carboxylation of D-ribulose 1,5-bisphosphate, the primary event in carbon dioxide fixation, as well as the oxidative fragmentation of the pentose substrate in the photorespiration process. Both reactions occur simultaneously and in competition at the same active site. This chain is Ribulose bisphosphate carboxylase large chain, found in Botrychium strictum (Fern).